The primary structure comprises 264 residues: Putative [LysW]-aminoadipate/[LysW]-glutamate kinase (264 aa).

Residues 34–35 (GG), arginine 61, and asparagine 169 contribute to the substrate site.

Belongs to the acetylglutamate kinase family. LysZ subfamily.

It localises to the cytoplasm. It catalyses the reaction [amino-group carrier protein]-C-terminal-N-(1,4-dicarboxybutan-1-yl)-L-glutamine + ATP = [amino-group carrier protein]-C-terminal-N-(1-carboxy-5-phosphooxy-5-oxopentan-1-yl)-L-glutamine + ADP. The enzyme catalyses [amino-group carrier protein]-C-terminal-gamma-(L-glutamyl)-L-glutamate + ATP = [amino-group carrier protein]-C-terminal-gamma-(5-phospho-L-glutamyl)-L-glutamate + ADP. Its pathway is amino-acid biosynthesis; L-lysine biosynthesis via AAA pathway; L-lysine from L-alpha-aminoadipate (Thermus route): step 2/5. The protein operates within amino-acid biosynthesis; L-arginine biosynthesis. In terms of biological role, involved in both the arginine and lysine biosynthetic pathways. Phosphorylates the LysW-bound precursors glutamate (for arginine biosynthesis), respectively alpha-aminoadipate (for lysine biosynthesis). In Ignicoccus hospitalis (strain KIN4/I / DSM 18386 / JCM 14125), this protein is Putative [LysW]-aminoadipate/[LysW]-glutamate kinase.